Reading from the N-terminus, the 451-residue chain is MREVISIHIGQAGIQVGNACWELYCLEHGIQPDGQMPSDKTIGGGDDAFNTFFSETGAGKHVPRCIFLDLEPTVVDEVRTGTYRQLFHPEQLISGKEDAANNFARGHYTIGKEIVDLALDRIRKLADNCTGLQGFLVFNAVGGGTGSGLGSLLLERLSVDYGKKSKLGFTVYPSPQVSTAVVEPYNSVLSTHSLLEHTDVAVMLDNEAIYDICRRSLDIERPTYTNLNRLIAQVISSLTASLRFDGALNVDITEFQTNLVPYPRIHFMLSSYAPIISAEKAYHEQLSVAEITNAAFEPASMMVKCDPLHGKYMACCLMYRGDVVPKDVNASVATIKTKRTIQFVDWCPTGFKCGINYQPPTVVPGVDLAKVQRAVCMISNSTAIGEIFSRLDHKFDLMYAKRAFVHWYVGEGMEEGEFSEAREDLAALEKDFEEVGAESAEGAGEGEGEEY.

Residue glutamine 11 coordinates GTP. Lysine 40 carries the post-translational modification N6-acetyllysine. Positions 71, 144, 145, 179, 206, and 228 each coordinate GTP. Glutamate 71 is a binding site for Mg(2+). Glutamate 254 is an active-site residue.

Belongs to the tubulin family. As to quaternary structure, dimer of alpha and beta chains. A typical microtubule is a hollow water-filled tube with an outer diameter of 25 nm and an inner diameter of 15 nM. Alpha-beta heterodimers associate head-to-tail to form protofilaments running lengthwise along the microtubule wall with the beta-tubulin subunit facing the microtubule plus end conferring a structural polarity. Microtubules usually have 13 protofilaments but different protofilament numbers can be found in some organisms and specialized cells. The cofactor is Mg(2+). Undergoes a tyrosination/detyrosination cycle, the cyclic removal and re-addition of a C-terminal tyrosine residue by the enzymes tubulin tyrosine carboxypeptidase (TTCP) and tubulin tyrosine ligase (TTL), respectively.

It is found in the cytoplasm. The protein localises to the cytoskeleton. The catalysed reaction is GTP + H2O = GDP + phosphate + H(+). Tubulin is the major constituent of microtubules, a cylinder consisting of laterally associated linear protofilaments composed of alpha- and beta-tubulin heterodimers. Microtubules grow by the addition of GTP-tubulin dimers to the microtubule end, where a stabilizing cap forms. Below the cap, tubulin dimers are in GDP-bound state, owing to GTPase activity of alpha-tubulin. This Chlamydomonas reinhardtii (Chlamydomonas smithii) protein is Tubulin alpha-2 chain (TUBA2).